We begin with the raw amino-acid sequence, 428 residues long: Cytochrome c biogenesis protein CcsB (428 aa).

3 helical membrane passes run 14 to 34 (LKFA…GTFI), 72 to 92 (SLWF…CSFR), and 162 to 182 (IGPL…AYGS).

The protein belongs to the Ccs1/CcsB family. As to quaternary structure, may interact with CcsA.

Its subcellular location is the cellular thylakoid membrane. Functionally, required during biogenesis of c-type cytochromes (cytochrome c6 and cytochrome f) at the step of heme attachment. The protein is Cytochrome c biogenesis protein CcsB of Prochlorococcus marinus (strain MIT 9301).